A 530-amino-acid polypeptide reads, in one-letter code: Putative ABC transporter ATP-binding protein SSO2030 (530 aa).

2 consecutive ABC transporter domains span residues 6 to 243 and 282 to 516; these read IRDL…LGLE and ALYA…EPPL. Residues 38–45 and 314–321 contribute to the ATP site; these read GRSGSGKS and GKNGSGKT.

It belongs to the ABC transporter superfamily.

The protein localises to the cell membrane. Probably part of an ABC transporter complex. Responsible for energy coupling to the transport system. In Saccharolobus solfataricus (strain ATCC 35092 / DSM 1617 / JCM 11322 / P2) (Sulfolobus solfataricus), this protein is Putative ABC transporter ATP-binding protein SSO2030.